The sequence spans 179 residues: Sec-independent protein translocase protein TatB (179 aa).

A helical membrane pass occupies residues Phe-2 to Gly-22. Residues Leu-98 to Leu-109 are compositionally biased toward low complexity. The segment at Leu-98 to Thr-179 is disordered.

This sequence belongs to the TatB family. In terms of assembly, the Tat system comprises two distinct complexes: a TatABC complex, containing multiple copies of TatA, TatB and TatC subunits, and a separate TatA complex, containing only TatA subunits. Substrates initially bind to the TatABC complex, which probably triggers association of the separate TatA complex to form the active translocon.

It is found in the cell membrane. In terms of biological role, part of the twin-arginine translocation (Tat) system that transports large folded proteins containing a characteristic twin-arginine motif in their signal peptide across membranes. Together with TatC, TatB is part of a receptor directly interacting with Tat signal peptides. TatB may form an oligomeric binding site that transiently accommodates folded Tat precursor proteins before their translocation. In Frankia casuarinae (strain DSM 45818 / CECT 9043 / HFP020203 / CcI3), this protein is Sec-independent protein translocase protein TatB.